Here is a 157-residue protein sequence, read N- to C-terminus: MAKVESFELDHTKVKAPYVRLITVETGNKGDKISNFDLRLVQPNENAIPTAGLHTIEHLLAGLLRDRMDGIIDCSPFGCRTGFHLIAWGEPTTTEVAKALKGALEEIANVTKWEDVPGTDIYSCGNYRDHSLFSAKEWAKKILDDGISDQPFERNVI.

Residues His-54, His-58, and Cys-124 each contribute to the Fe cation site.

Belongs to the LuxS family. As to quaternary structure, homodimer. The cofactor is Fe cation.

It carries out the reaction S-(5-deoxy-D-ribos-5-yl)-L-homocysteine = (S)-4,5-dihydroxypentane-2,3-dione + L-homocysteine. Functionally, involved in the synthesis of autoinducer 2 (AI-2) which is secreted by bacteria and is used to communicate both the cell density and the metabolic potential of the environment. The regulation of gene expression in response to changes in cell density is called quorum sensing. Catalyzes the transformation of S-ribosylhomocysteine (RHC) to homocysteine (HC) and 4,5-dihydroxy-2,3-pentadione (DPD). The sequence is that of S-ribosylhomocysteine lyase from Pediococcus pentosaceus (strain ATCC 25745 / CCUG 21536 / LMG 10740 / 183-1w).